We begin with the raw amino-acid sequence, 156 residues long: Small ribosomal subunit protein uS7 (156 aa).

Belongs to the universal ribosomal protein uS7 family. As to quaternary structure, part of the 30S ribosomal subunit. Contacts proteins S9 and S11.

Functionally, one of the primary rRNA binding proteins, it binds directly to 16S rRNA where it nucleates assembly of the head domain of the 30S subunit. Is located at the subunit interface close to the decoding center, probably blocks exit of the E-site tRNA. The polypeptide is Small ribosomal subunit protein uS7 (Ligilactobacillus salivarius (strain UCC118) (Lactobacillus salivarius)).